The sequence spans 56 residues: uncharacterized protein (56 aa).

This is an uncharacterized protein from Dictyostelium discoideum (Social amoeba).